The primary structure comprises 123 residues: Large ribosomal subunit protein uL14 (123 aa).

This sequence belongs to the universal ribosomal protein uL14 family. As to quaternary structure, part of the 50S ribosomal subunit. Forms a cluster with proteins L3 and L19. In the 70S ribosome, L14 and L19 interact and together make contacts with the 16S rRNA in bridges B5 and B8.

Functionally, binds to 23S rRNA. Forms part of two intersubunit bridges in the 70S ribosome. This is Large ribosomal subunit protein uL14 from Cronobacter sakazakii (strain ATCC BAA-894) (Enterobacter sakazakii).